Reading from the N-terminus, the 216-residue chain is MAADSQTPWLLTFSLLCLLWPQEAGAFPAMPLSSLFANAVLRAQHLHQLAADTYKEFERAYIPEGQRYSIQNAQAAFCFSETIPAPTGKEEAQQRTDMELLRFSLLLIQSWLGPVQFLSRIFTNSLMFGTSDRVYEKLKDLEEGIQALMQELEDGSPRIGQILKQTYDKFDANMRSDDALLKNYGLLSCFKKDLHKAETYLRVMKCRRFAESSCAF.

The signal sequence occupies residues 1–26 (MAADSQTPWLLTFSLLCLLWPQEAGA). Residue His45 participates in Zn(2+) binding. Cys78 and Cys189 form a disulfide bridge. Phosphoserine is present on Ser131. Glu198 is a binding site for Zn(2+). Cysteines 206 and 214 form a disulfide.

The protein belongs to the somatotropin/prolactin family.

It is found in the secreted. Functionally, plays an important role in growth control. Its major role in stimulating body growth is to stimulate the liver and other tissues to secrete IGF1. It stimulates both the differentiation and proliferation of myoblasts. It also stimulates amino acid uptake and protein synthesis in muscle and other tissues. The protein is Somatotropin (Gh1) of Rattus norvegicus (Rat).